The chain runs to 392 residues: UPF0229 protein CPE1333 (392 aa).

The tract at residues 75-100 is disordered; the sequence is VTTGTGEERRGDRISSDKRKAISNNK. Positions 80 to 94 are enriched in basic and acidic residues; sequence GEERRGDRISSDKRK.

The protein belongs to the UPF0229 family.

This is UPF0229 protein CPE1333 from Clostridium perfringens (strain 13 / Type A).